We begin with the raw amino-acid sequence, 378 residues long: Chaperone protein DnaJ (378 aa).

The 65-residue stretch at 5–69 (EYYDRLGVSK…QKRAAYDQYG (65 aa)) folds into the J domain. The CR-type zinc finger occupies 134–216 (GVEKEVSYNR…CHGTGHEKQA (83 aa)). Positions 147, 150, 164, 167, 190, 193, 204, and 207 each coordinate Zn(2+). CXXCXGXG motif repeat units lie at residues 147–154 (CGTCLGSG), 164–171 (CRKCHGSG), 190–197 (CDICHGSG), and 204–211 (CQTCHGTG).

Belongs to the DnaJ family. As to quaternary structure, homodimer. Requires Zn(2+) as cofactor.

It is found in the cytoplasm. Participates actively in the response to hyperosmotic and heat shock by preventing the aggregation of stress-denatured proteins and by disaggregating proteins, also in an autonomous, DnaK-independent fashion. Unfolded proteins bind initially to DnaJ; upon interaction with the DnaJ-bound protein, DnaK hydrolyzes its bound ATP, resulting in the formation of a stable complex. GrpE releases ADP from DnaK; ATP binding to DnaK triggers the release of the substrate protein, thus completing the reaction cycle. Several rounds of ATP-dependent interactions between DnaJ, DnaK and GrpE are required for fully efficient folding. Also involved, together with DnaK and GrpE, in the DNA replication of plasmids through activation of initiation proteins. This chain is Chaperone protein DnaJ, found in Streptococcus pyogenes.